Reading from the N-terminus, the 141-residue chain is Large ribosomal subunit protein uL16 (141 aa).

Belongs to the universal ribosomal protein uL16 family. In terms of assembly, part of the 50S ribosomal subunit.

Its function is as follows. Binds 23S rRNA and is also seen to make contacts with the A and possibly P site tRNAs. The polypeptide is Large ribosomal subunit protein uL16 (Microchaete diplosiphon (Fremyella diplosiphon)).